We begin with the raw amino-acid sequence, 283 residues long: ATP synthase gamma chain (283 aa).

It belongs to the ATPase gamma chain family. As to quaternary structure, F-type ATPases have 2 components, CF(1) - the catalytic core - and CF(0) - the membrane proton channel. CF(1) has five subunits: alpha(3), beta(3), gamma(1), delta(1), epsilon(1). CF(0) has three main subunits: a, b and c.

The protein resides in the cell membrane. Produces ATP from ADP in the presence of a proton gradient across the membrane. The gamma chain is believed to be important in regulating ATPase activity and the flow of protons through the CF(0) complex. The polypeptide is ATP synthase gamma chain (Desulforamulus reducens (strain ATCC BAA-1160 / DSM 100696 / MI-1) (Desulfotomaculum reducens)).